The following is a 136-amino-acid chain: Large ribosomal subunit protein uL13 (136 aa).

It belongs to the universal ribosomal protein uL13 family. As to quaternary structure, part of the 50S ribosomal subunit.

Its function is as follows. This protein is one of the early assembly proteins of the 50S ribosomal subunit, although it is not seen to bind rRNA by itself. It is important during the early stages of 50S assembly. The chain is Large ribosomal subunit protein uL13 from Thermoplasma volcanium (strain ATCC 51530 / DSM 4299 / JCM 9571 / NBRC 15438 / GSS1).